The sequence spans 696 residues: MTIHSPWETSHSKKGLIDIGTHRLFARVSGPRRKPGDPVILIECGGGSISLLWTGVMRALSPTYRIFTYSRAGLEGSDLPPNRGPRTAVEMADDFEKLLDVAGIKSPYIIVGHSYAGVQIRTWMHVHDRMEDIVGAVFVDTATEYTYPRMPIREPQFWFLMEQIPNPAHVLGYDRVHKFFNKEQWEEVLSTDLGHEEKDVDASAAQLKTWKQFERQIMEDKPVSVIKGYFAEDLRRLCVEAERIGAGTPAQRQYVMENLDSLDRVFEETETEQLRLSSCARMVHAAPGSGHTIVFSDPEIVMNEIKWVVEQYEAKRSIATIKGDLSNITAPPFLLASQSTCEFPSYWAEHPSIFVAPALEPDPKKRALLVLRWFLAALKRQQYAGRDEKEGVKKPLNAFLGELFFAQWQDQSGTTKLVSEQVSHHPPITACYLWNDEHGVRADGFACQSITFSGTVNIKQMGHAILHIDKYDEDYLIPLPNVKVQGLLTGTPYPELVGSYQIACSSGFVADIDFSGKKLFGMSGTKNMLHAALYSADDKQRENPIYTIEGAWNDKFTIRDESTGENVETYDTAANPATILEVAPLDLQDPWESRKAWGETISSLNGGKMQGASDAKSKVEQGQRAMRKQDEQNGSKWEPVFFSNEPRDERYIRLTAVAGTSTEEHSQSGFWKFDKDRAERARKPYHGSLRPDNVES.

Positions 603–642 (SLNGGKMQGASDAKSKVEQGQRAMRKQDEQNGSKWEPVFF) are disordered. Basic and acidic residues predominate over residues 615–633 (AKSKVEQGQRAMRKQDEQN).

This sequence belongs to the OSBP family.

Its function is as follows. Probable transporter; part of the gene cluster that mediates the biosynthesis of enfumafungin, a glycosylated fernene-type triterpenoid with potent antifungal activity, mediated by its interaction with beta-1,3-glucan synthase and the fungal cell wall. Might be involved in transport of enfumafungin to and across organelle membranes. The sequence is that of Probable transporter efuK from Hormonema carpetanum.